A 237-amino-acid polypeptide reads, in one-letter code: N-alpha-acetyltransferase 40 (237 aa).

Gly-2 is lipidated: N-myristoyl glycine. An N-acetyltransferase domain is found at 63–216 (SGLEPATVDW…EDCSYEILSR (154 aa)). Substrate-binding positions include Tyr-85, 127–129 (DVE), and Tyr-138. Residues 140–142 (VQL) and 148–153 (RKGLGK) each bind acetyl-CoA. Thr-174 contacts substrate. Residue Asn-179 participates in acetyl-CoA binding. Substrate contacts are provided by Ser-197 and Tyr-211.

The protein belongs to the acetyltransferase family. NAA40 subfamily.

It localises to the cytoplasm. The protein localises to the nucleus. The enzyme catalyses N-terminal L-seryl-[histone H4] + acetyl-CoA = N-terminal N(alpha)-acetyl-L-seryl-[histone H4] + CoA + H(+). It catalyses the reaction N-terminal L-seryl-[histone H2A] + acetyl-CoA = N-terminal N(alpha)-acetyl-L-seryl-[histone H2A] + CoA + H(+). Functionally, N-alpha-acetyltransferase that specifically mediates the acetylation of the N-terminal residues of histones H4 and H2A. In contrast to other N-alpha-acetyltransferase, has a very specific selectivity for histones H4 and H2A N-terminus and specifically recognizes the 'Ser-Gly-Arg-Gly sequence'. Acts as a negative regulator of apoptosis. May play a role in hepatic lipid metabolism. This is N-alpha-acetyltransferase 40 from Mus musculus (Mouse).